The primary structure comprises 146 residues: VHLTADEKAAVTALWGKVNVDEVGGEALGRLLVVYPWTQRFFDSFGDLSSPDAVMGNPKVKAHGKKVLNSFSDGLKNLDNLKGTFAKLSELHCDKLHVDPENFKLLGNVLVCVLAHHFGKEFTPQVQAAYQKVVAGVANALAHKYH.

Position 1 is an N-acetylvaline (V1). Residues 2 to 146 (HLTADEKAAV…VANALAHKYH (145 aa)) enclose the Globin domain. At T12 the chain carries Phosphothreonine. Phosphoserine is present on S44. N6-acetyllysine is present on K59. Residue H63 participates in heme b binding. K82 carries the post-translational modification N6-acetyllysine. A heme b-binding site is contributed by H92. S-nitrosocysteine is present on C93. K144 bears the N6-acetyllysine mark.

This sequence belongs to the globin family. Heterotetramer of two alpha chains and two beta chains. As to expression, red blood cells.

Its function is as follows. Involved in oxygen transport from the lung to the various peripheral tissues. This is Hemoglobin subunit beta (HBB) from Odobenus rosmarus divergens (Pacific walrus).